The following is an 83-amino-acid chain: Arminin 4364 (83 aa).

An N-terminal signal peptide occupies residues 1 to 18 (MKTVFAILFLAFIALTYA). Positions 19–55 (RSYEDVKEEIKNEVEKEILEDLEKETDELNERKINDA) are excised as a propeptide. Position 80 is a valine amide (valine 80).

It belongs to the arminin family. Expressed in entodermal epithelium along the body column.

It is found in the secreted. The protein localises to the target cell membrane. In terms of biological role, antimicrobial peptide with a broad-spectrum antimicrobial activity. Keeps its antibacterial activity under a wide range of salt concentrations that mimic physiological conditions of human blood, which is surprising, since Hydra is an obligate freshwater animal with nearly no salt tolerance. Does not affect red blood cells. The chain is Arminin 4364 from Hydra vulgaris (Hydra).